Consider the following 249-residue polypeptide: 5'-nucleotidase SurE (249 aa).

A divalent metal cation is bound by residues aspartate 9, aspartate 10, serine 40, and asparagine 92.

It belongs to the SurE nucleotidase family. A divalent metal cation is required as a cofactor.

The protein localises to the cytoplasm. The catalysed reaction is a ribonucleoside 5'-phosphate + H2O = a ribonucleoside + phosphate. In terms of biological role, nucleotidase that shows phosphatase activity on nucleoside 5'-monophosphates. This Shewanella baltica (strain OS195) protein is 5'-nucleotidase SurE.